Reading from the N-terminus, the 469-residue chain is MEAQTLYEKLWSSHVVHQEADGTALIYIDRHLIHEVTSPQAFEGLKLAGRKPWRVSSIVATADHNTPTDHWERGILDPVSRQQVETLDANIREVGALAYFPFRDARQGIVHVIGPEIGATLPGMTVVCGDSHTSTHGAFACLAHGIGTSEVEHVLATQCLLQKRSKTMLVRVDGELGRGVSAKDIALAIIGRLGTAGGTGYAIEFGGSAIRALSMEGRMTICNMAIEAGARAGLVAVDQTTIDYLRDKPLAPKGQAWEQAVAYWRTLKTDDGAKFDKIVELDAAQIQPQVTWGTSPEMVETVSGRVPDPAGIGDPVRREGIERALKYMGLAPNTPISEIPVDQVFIGSCTNSRIEDLREAASVAKGRSKAPSVKRVLVVPGSGLVKRQAEAEGLHEVFLAAGFEWREPGCSMCLAMNADRLEPGEHCASTSNRNFEGRQGAGGRTHLVSPAMAAAAAVVGHFIDVRELA.

[4Fe-4S] cluster contacts are provided by cysteine 349, cysteine 410, and cysteine 413.

This sequence belongs to the aconitase/IPM isomerase family. LeuC type 1 subfamily. Heterodimer of LeuC and LeuD. Requires [4Fe-4S] cluster as cofactor.

It catalyses the reaction (2R,3S)-3-isopropylmalate = (2S)-2-isopropylmalate. It participates in amino-acid biosynthesis; L-leucine biosynthesis; L-leucine from 3-methyl-2-oxobutanoate: step 2/4. Catalyzes the isomerization between 2-isopropylmalate and 3-isopropylmalate, via the formation of 2-isopropylmaleate. This Aromatoleum aromaticum (strain DSM 19018 / LMG 30748 / EbN1) (Azoarcus sp. (strain EbN1)) protein is 3-isopropylmalate dehydratase large subunit.